A 104-amino-acid polypeptide reads, in one-letter code: Succinate dehydrogenase assembly factor 4, mitochondrial (104 aa).

The N-terminal 30 residues, 1–30, are a transit peptide targeting the mitochondrion; sequence MVSTTLSVSRMTFVWRAARPSLLNHSLRKM. Positions 29–104 are disordered; it reads KMSYQEGKPE…WERKGRCIDF (76 aa). Basic and acidic residues-rich tracts occupy residues 63–83 and 91–104; these read EREP…EKGG and RYGD…CIDF.

The protein belongs to the SDHAF4 family. In terms of assembly, interacts with Sdha in its FAD-bound form.

The protein resides in the mitochondrion matrix. In terms of biological role, plays an essential role in the assembly of succinate dehydrogenase (SDH), an enzyme complex (also referred to as respiratory complex II) that is a component of both the tricarboxylic acid (TCA) cycle and the mitochondrial electron transport chain, and which couples the oxidation of succinate to fumarate with the reduction of ubiquinone (coenzyme Q) to ubiquinol. Binds to the flavoprotein subunit Sdha in its FAD-bound form, blocking the generation of excess reactive oxygen species (ROS) and facilitating its assembly with the iron-sulfur protein subunit Sdhb into the SDH catalytic dimer. The sequence is that of Succinate dehydrogenase assembly factor 4, mitochondrial from Mus musculus (Mouse).